The primary structure comprises 640 residues: Ribonuclease J (640 aa).

Zn(2+) is bound by residues H75, H77, D79, H80, H145, and D167. 368-372 (HVSGH) serves as a coordination point for substrate. A Zn(2+)-binding site is contributed by H394. A disordered region spans residues 578–640 (TVSATSATPA…RKRSTTSVSS (63 aa)). Over residues 598–610 (PEPKVKAKPEKKV) the composition is skewed to basic and acidic residues.

This sequence belongs to the metallo-beta-lactamase superfamily. RNA-metabolizing metallo-beta-lactamase-like family. Bacterial RNase J subfamily. In terms of assembly, homodimer, may be a subunit of the RNA degradosome. The cofactor is Zn(2+).

The protein resides in the cytoplasm. An RNase that has 5'-3' exonuclease and possibly endoonuclease activity. Involved in maturation of rRNA and in some organisms also mRNA maturation and/or decay. This Synechocystis sp. (strain ATCC 27184 / PCC 6803 / Kazusa) protein is Ribonuclease J.